The sequence spans 641 residues: Calpain-6 (641 aa).

The region spanning 26–343 (LFCDPTFLPE…FHKLNVCRNV (318 aa)) is the Calpain catalytic domain. Residues 344–495 (NNPVFGRKEL…IFSEVPVQLR (152 aa)) form a domain III region. The 124-residue stretch at 498 to 621 (TLDMPKMSCW…YLRKKGGPTA (124 aa)) folds into the C2 domain.

This sequence belongs to the peptidase C2 family. As to quaternary structure, interacts (via domain III) with microtubules. Interacts (via domain II) with ARHGEF2 (via the N-terminal zinc finger).

It is found in the cytoplasm. The protein localises to the perinuclear region. Its subcellular location is the cytoskeleton. The protein resides in the spindle. Its function is as follows. Microtubule-stabilizing protein that may be involved in the regulation of microtubule dynamics and cytoskeletal organization. May act as a regulator of RAC1 activity through interaction with ARHGEF2 to control lamellipodial formation and cell mobility. Does not seem to have protease activity as it has lost the active site residues. The protein is Calpain-6 (Capn6) of Mus musculus (Mouse).